A 458-amino-acid polypeptide reads, in one-letter code: Secretion-regulating guanine nucleotide exchange factor (458 aa).

RCC1 repeat units lie at residues 15 to 67, 68 to 119, 120 to 171, 172 to 230, 231 to 283, 284 to 351, and 352 to 402; these read AALF…VTDG, GDLF…LTEN, GQVL…ATAS, GIVF…LTDA, GEVY…QTET, GKMF…IIGG, and VCYS…LCQL. A disordered region spans residues 420–458; it reads DAIEDTESQKAMDKERNWKERQSETSTQSQSDWSRNGGL. Over residues 426–442 the composition is skewed to basic and acidic residues; it reads ESQKAMDKERNWKERQS. Serine 427 carries the phosphoserine modification.

As to quaternary structure, interacts with SEC5. The interaction occurs only in the presence of magnesium or manganese and is stimulated by dCTP or GTP.

It localises to the cytoplasm. The protein localises to the nucleus. Probable guanine nucleotide exchange factor (GEF), which may be involved in the secretion process. This chain is Secretion-regulating guanine nucleotide exchange factor (SERGEF), found in Homo sapiens (Human).